A 223-amino-acid chain; its full sequence is MIF4G domain-containing protein A (223 aa).

The MIF4G domain occupies 7–206 (QEDYKMQAFD…LEMIEYRAAG (200 aa)).

Belongs to the MIF4GD family. In terms of assembly, interacts with eif4g1, eif4g2 and slbp; probably tethered by SLBP to the 3'-end of mRNAs ending with the histone stem-loop, it also interacts with eif4g1 which is bound to their 5'-end.

Its subcellular location is the cytoplasm. The protein localises to the nucleus. In terms of biological role, functions in replication-dependent translation of histone mRNAs which differ from other eukaryotic mRNAs in that they do not end with a poly-A tail but a stem-loop. May participate in circularizing those mRNAs specifically enhancing their translation. This Xenopus laevis (African clawed frog) protein is MIF4G domain-containing protein A (mif4gd-a).